A 320-amino-acid polypeptide reads, in one-letter code: tRNA U34 carboxymethyltransferase (320 aa).

Carboxy-S-adenosyl-L-methionine contacts are provided by residues K89, W103, K108, G127, 177-178, M193, Y197, and R312; that span reads LE.

This sequence belongs to the class I-like SAM-binding methyltransferase superfamily. CmoB family. As to quaternary structure, homotetramer.

The catalysed reaction is carboxy-S-adenosyl-L-methionine + 5-hydroxyuridine(34) in tRNA = 5-carboxymethoxyuridine(34) in tRNA + S-adenosyl-L-homocysteine + H(+). Catalyzes carboxymethyl transfer from carboxy-S-adenosyl-L-methionine (Cx-SAM) to 5-hydroxyuridine (ho5U) to form 5-carboxymethoxyuridine (cmo5U) at position 34 in tRNAs. The polypeptide is tRNA U34 carboxymethyltransferase (Stutzerimonas stutzeri (strain A1501) (Pseudomonas stutzeri)).